The primary structure comprises 342 residues: Cell division protein ZipA (342 aa).

Over Met1 to Leu6 the chain is Periplasmic. The chain crosses the membrane as a helical span at residues Val7–Ile27. Topologically, residues Arg28–Ala342 are cytoplasmic. Positions Lys33–Val57 are disordered. Positions Gln47–Val57 are enriched in basic and acidic residues.

The protein belongs to the ZipA family. As to quaternary structure, interacts with FtsZ via their C-terminal domains.

The protein localises to the cell inner membrane. Functionally, essential cell division protein that stabilizes the FtsZ protofilaments by cross-linking them and that serves as a cytoplasmic membrane anchor for the Z ring. Also required for the recruitment to the septal ring of downstream cell division proteins. The polypeptide is Cell division protein ZipA (Shewanella sp. (strain W3-18-1)).